Consider the following 640-residue polypeptide: Epithelial sodium channel subunit beta (640 aa).

The Cytoplasmic portion of the chain corresponds to 1–50 (MHVKKYLLKGLHRLQKGPGYTYKELLVWYCDNTNTHGPKRIICEGPKKKA). Residues 51–71 (MWFLLTLLFAALVCWQWGIFI) form a helical membrane-spanning segment. Topologically, residues 72–532 (RTYLSWEVSV…GGQFGFWMGG (461 aa)) are extracellular. 9 cysteine pairs are disulfide-bonded: Cys-98-Cys-272, Cys-184-Cys-189, Cys-196-Cys-203, Cys-249-Cys-256, Cys-361-Cys-448, Cys-386-Cys-444, Cys-390-Cys-440, Cys-399-Cys-426, and Cys-401-Cys-415. The N-linked (GlcNAc...) asparagine glycan is linked to Asn-260. The helical transmembrane segment at 533–553 (SVLCLIEFGEIIIDFVWITII) threads the bilayer. The Cytoplasmic segment spans residues 554–640 (KLVALAKSLR…IESDSEGDAI (87 aa)). The interval 590-640 (FQPDTAPRSPNTGPYPSEQALPIPGTPPPNYDSLRLQPLDVIESDSEGDAI) is disordered. The PY motif; recruits WW domain-containing proteins and is thereby required for ubiquitination and inhibition of the channel by NEDD4 and NEDD4L motif lies at 616 to 620 (PPPNY). Positions 631-640 (IESDSEGDAI) are enriched in acidic residues. Phosphoserine occurs at positions 633 and 635.

Belongs to the amiloride-sensitive sodium channel (TC 1.A.6) family. SCNN1B subfamily. In terms of assembly, component of the heterotrimeric epithelial sodium channel (ENaC) composed of an alpha/SCNN1A, a beta/SCNN1B and a gamma/SCNN1G subunit. An additional delta/SCNN1D subunit can replace the alpha/SCNN1A subunit to form an alternative channel with specific properties. Interacts with WWP1 (via WW domains). Interacts with WWP2 (via WW domains); inhibits the channel. Interacts with the full-length immature form of PCSK9 (pro-PCSK9); inhibits ENaC by promoting its proteasomal degradation. Interacts (N-glycosylated) with BPIFA1; the interaction is direct and inhibits the proteolytic processing of SCNN1A and SCNN1G and the activation of ENaC. In terms of processing, ubiquitinated. Can be ubiquitinated at multiple sites and undergo monoubiquitination and polyubiquitination. Ubiquitination by NEDD4 or NEDD4L inhibits the ENaC channel through endocytosis, intracellular retention and degradation of its individual subunits. However, some studies could not confirm the ubiquitination of this subunit of the ENaC. Phosphorylated on serine and threonine residues. Aldosterone and insulin increase the basal level of phosphorylation. Post-translationally, N-glycosylated. N-glycosylation is required for interaction with BPIFA1. Detected in placenta, lung and kidney. Expressed in kidney (at protein level).

The protein localises to the apical cell membrane. It localises to the cytoplasmic vesicle membrane. The enzyme catalyses Na(+)(in) = Na(+)(out). With respect to regulation, originally identified and characterized by its inhibition by the diuretic drug amiloride. In terms of biological role, this is one of the three pore-forming subunits of the heterotrimeric epithelial sodium channel (ENaC), a critical regulator of sodium balance and fluid homeostasis. ENaC operates in epithelial tissues, where it mediates the electrodiffusion of sodium ions from extracellular fluid through the apical membrane of cells, with water following osmotically. It plays a key role in maintaining sodium homeostasis through electrogenic sodium reabsorption in the kidneys. Additionally, ENaC is essential for airway surface liquid homeostasis, which is crucial for proper mucus clearance. The chain is Epithelial sodium channel subunit beta from Homo sapiens (Human).